A 451-amino-acid polypeptide reads, in one-letter code: NADH-quinone oxidoreductase subunit H (451 aa).

A run of 9 helical transmembrane segments spans residues 30–50 (LIIV…LFMI), 98–118 (AVFI…FAVI), 138–158 (LPVA…GIVL), 176–196 (AAQV…VFLY), 213–233 (WGIL…VGET), 262–282 (LFYL…TTLF), 302–322 (WWPV…FIWL), 336–356 (QFGW…EAAI), and 368–388 (VIPF…ADLV).

It belongs to the complex I subunit 1 family. In terms of assembly, NDH-1 is composed of 14 different subunits. Subunits NuoA, H, J, K, L, M, N constitute the membrane sector of the complex.

It is found in the cell membrane. It catalyses the reaction a quinone + NADH + 5 H(+)(in) = a quinol + NAD(+) + 4 H(+)(out). NDH-1 shuttles electrons from NADH, via FMN and iron-sulfur (Fe-S) centers, to quinones in the respiratory chain. The immediate electron acceptor for the enzyme in this species is believed to be ubiquinone. Couples the redox reaction to proton translocation (for every two electrons transferred, four hydrogen ions are translocated across the cytoplasmic membrane), and thus conserves the redox energy in a proton gradient. This subunit may bind ubiquinone. The protein is NADH-quinone oxidoreductase subunit H of Acidothermus cellulolyticus (strain ATCC 43068 / DSM 8971 / 11B).